The sequence spans 823 residues: Axial budding pattern protein 2 (823 aa).

Residues 1-22 (MTQLQISLLLTATISLLHLVVA) form the signal peptide. Residues 23-508 (TPYEAYPIGK…SHNKKAVAIA (486 aa)) are Extracellular-facing. N-linked (GlcNAc...) asparagine glycosylation is found at Asn41, Asn50, Asn96, Asn117, Asn163, Asn260, Asn266, Asn304, Asn324, Asn359, Asn382, Asn389, Asn403, Asn447, Asn451, and Asn495. The tract at residues 447–467 (NHSANATSTRSSHHSTSTSSY) is disordered. A compositionally biased stretch (low complexity) spans 449-467 (SANATSTRSSHHSTSTSSY). Residues 509 to 529 (CGVAIPLGVILVALICFLIFW) traverse the membrane as a helical segment. Residues 530–823 (RRRRENPDDE…DIHGRIPEML (294 aa)) lie on the Cytoplasmic side of the membrane. 2 disordered regions span residues 539–576 (ENLP…ASSY) and 596–627 (HSAT…QSQS). 2 stretches are compositionally biased toward polar residues: residues 552–566 (NPAN…TPLN) and 614–626 (SGMN…FQSQ). A phosphoserine mark is found at Ser642, Ser673, and Ser676. Disordered regions lie at residues 700 to 734 (PEKE…VTPS) and 751 to 771 (DSQS…SSDD). Polar residues predominate over residues 709 to 724 (DVTMSSLDPWNSNISP). The segment covering 760-769 (TPTTMSTSSS) has biased composition (low complexity).

Interacts with BEM1, BUD3, BUD4, BUD5, CDC24 and CDC42. Post-translationally, O-glycosylated by PMT4 and N-glycosylated. O-glycosylation increases activity in daughter cells by enhancing stability and promoting localization to the plasma membrane. May also be O-glycosylated by PMT1 and PMT2.

The protein resides in the cell membrane. Required for haploid cells axial budding pattern. Acts as an anchor to help direct new growth components and/or polarity establishment components like the BUD5 GTP/GDP exchange factor to localize at the cortical axial budding site. Regulates septin organization in late G1 independently of its role in polarity-axis determination. The sequence is that of Axial budding pattern protein 2 (AXL2) from Saccharomyces cerevisiae (strain ATCC 204508 / S288c) (Baker's yeast).